Reading from the N-terminus, the 296-residue chain is Phosphoribosylaminoimidazole-succinocarboxamide synthase (296 aa).

It belongs to the SAICAR synthetase family.

It catalyses the reaction 5-amino-1-(5-phospho-D-ribosyl)imidazole-4-carboxylate + L-aspartate + ATP = (2S)-2-[5-amino-1-(5-phospho-beta-D-ribosyl)imidazole-4-carboxamido]succinate + ADP + phosphate + 2 H(+). Its pathway is purine metabolism; IMP biosynthesis via de novo pathway; 5-amino-1-(5-phospho-D-ribosyl)imidazole-4-carboxamide from 5-amino-1-(5-phospho-D-ribosyl)imidazole-4-carboxylate: step 1/2. The sequence is that of Phosphoribosylaminoimidazole-succinocarboxamide synthase from Geobacter metallireducens (strain ATCC 53774 / DSM 7210 / GS-15).